The chain runs to 417 residues: Cysteate synthase (417 aa).

N6-(pyridoxal phosphate)lysine is present on lysine 102. Pyridoxal 5'-phosphate contacts are provided by asparagine 128 and threonine 380.

This sequence belongs to the threonine synthase family. Cysteate synthase subfamily. As to quaternary structure, homotrimer. Pyridoxal 5'-phosphate is required as a cofactor.

The enzyme catalyses O-phospho-L-serine + sulfite + H(+) = L-cysteate + phosphate. It participates in cofactor biosynthesis; coenzyme M biosynthesis. In terms of biological role, specifically catalyzes the beta-elimination of phosphate from L-phosphoserine and the beta-addition of sulfite to the dehydroalanine intermediate to produce L-cysteate. The polypeptide is Cysteate synthase (Methanocella arvoryzae (strain DSM 22066 / NBRC 105507 / MRE50)).